Consider the following 176-residue polypeptide: Peptide methionine sulfoxide reductase MsrA (176 aa).

Residue Cys12 is part of the active site.

This sequence belongs to the MsrA Met sulfoxide reductase family.

It carries out the reaction L-methionyl-[protein] + [thioredoxin]-disulfide + H2O = L-methionyl-(S)-S-oxide-[protein] + [thioredoxin]-dithiol. It catalyses the reaction [thioredoxin]-disulfide + L-methionine + H2O = L-methionine (S)-S-oxide + [thioredoxin]-dithiol. Its function is as follows. Has an important function as a repair enzyme for proteins that have been inactivated by oxidation. Catalyzes the reversible oxidation-reduction of methionine sulfoxide in proteins to methionine. This Thermus thermophilus (strain ATCC BAA-163 / DSM 7039 / HB27) protein is Peptide methionine sulfoxide reductase MsrA.